The chain runs to 98 residues: Large ribosomal subunit protein eL30 (98 aa).

The protein belongs to the eukaryotic ribosomal protein eL30 family.

In Methanothermobacter thermautotrophicus (strain ATCC 29096 / DSM 1053 / JCM 10044 / NBRC 100330 / Delta H) (Methanobacterium thermoautotrophicum), this protein is Large ribosomal subunit protein eL30 (rpl30e).